The primary structure comprises 451 residues: Signal transduction histidine-protein kinase ArlS (451 aa).

Helical transmembrane passes span 11 to 31 (IIVT…IIIF) and 156 to 176 (IIAL…SYVF). In terms of domain architecture, HAMP spans 178–231 (TQITKPLVSLSNKMIEIRRDGFQNKLQLNTNYEEIDNLANTFNEMMSQIEESFN). Positions 239 to 451 (DASHELRTPL…NKGTTFKIIF (213 aa)) constitute a Histidine kinase domain. His242 carries the phosphohistidine; by autocatalysis modification.

In terms of processing, autophosphorylated.

The protein localises to the cell membrane. It catalyses the reaction ATP + protein L-histidine = ADP + protein N-phospho-L-histidine.. Member of the two-component regulatory system ArlS/ArlR involved in the regulation of adhesion, autolysis, multidrug resistance and virulence. ArlS probably functions as a sensor protein kinase which is autophosphorylated at a histidine residue and transfers its phosphate group to ArlR. The chain is Signal transduction histidine-protein kinase ArlS (arlS) from Staphylococcus aureus (strain bovine RF122 / ET3-1).